A 250-amino-acid polypeptide reads, in one-letter code: Ribose-5-phosphate isomerase A (250 aa).

Substrate contacts are provided by residues T33 to T36, D89 to D92, and K102 to G105. E111 acts as the Proton acceptor in catalysis. K129 is a binding site for substrate.

This sequence belongs to the ribose 5-phosphate isomerase family. As to quaternary structure, homodimer.

It carries out the reaction aldehydo-D-ribose 5-phosphate = D-ribulose 5-phosphate. Its pathway is carbohydrate degradation; pentose phosphate pathway; D-ribose 5-phosphate from D-ribulose 5-phosphate (non-oxidative stage): step 1/1. In terms of biological role, catalyzes the reversible conversion of ribose-5-phosphate to ribulose 5-phosphate. The sequence is that of Ribose-5-phosphate isomerase A from Cereibacter sphaeroides (strain ATCC 17025 / ATH 2.4.3) (Rhodobacter sphaeroides).